The primary structure comprises 31 residues: Delta-conotoxin-like ErVIA (31 aa).

The propeptide occupies 1-4; sequence LNKR. Cystine bridges form between cysteine 5-cysteine 21, cysteine 12-cysteine 25, and cysteine 20-cysteine 29.

Belongs to the conotoxin O1 superfamily. Expressed by the venom duct.

The protein localises to the secreted. This toxin activates voltage-gated sodium channels. It shifts the voltage-dependence of activation to more hyperpolarized potentials but has only little effect on channel inactivation. It is active on Nav1.3/SCN3A (EC(50)=3.98 nM), Nav1.4/SCN4A (EC(50)=4.99 nM), Nav1.6/SCN8A (EC(50)=1.27 nM) and Nav1.7/SCN9A (EC(50)=2.42 nM) voltage-gated sodium channels. In vivo, it induces nocifensive or pain-like behaviors in mice when injected intraplantarly. The chain is Delta-conotoxin-like ErVIA from Conus eburneus (Ivory cone).